A 568-amino-acid chain; its full sequence is Light-independent protochlorophyllide reductase subunit B (568 aa).

Aspartate 36 contributes to the [4Fe-4S] cluster binding site. Aspartate 293 serves as the catalytic Proton donor. Position 437-438 (437-438) interacts with substrate; that stretch reads GM. The segment at 476–517 is disordered; the sequence is ANGHPEAGVSVGAAEPSAAPSRSVVTEESNRATTPSSSTVHP. Polar residues predominate over residues 498-515; that stretch reads SVVTEESNRATTPSSSTV.

This sequence belongs to the ChlB/BchB/BchZ family. As to quaternary structure, protochlorophyllide reductase is composed of three subunits; BchL, BchN and BchB. Forms a heterotetramer of two BchB and two BchN subunits. The cofactor is [4Fe-4S] cluster.

It carries out the reaction chlorophyllide a + oxidized 2[4Fe-4S]-[ferredoxin] + 2 ADP + 2 phosphate = protochlorophyllide a + reduced 2[4Fe-4S]-[ferredoxin] + 2 ATP + 2 H2O. It functions in the pathway porphyrin-containing compound metabolism; bacteriochlorophyll biosynthesis (light-independent). Its function is as follows. Component of the dark-operative protochlorophyllide reductase (DPOR) that uses Mg-ATP and reduced ferredoxin to reduce ring D of protochlorophyllide (Pchlide) to form chlorophyllide a (Chlide). This reaction is light-independent. The NB-protein (BchN-BchB) is the catalytic component of the complex. This is Light-independent protochlorophyllide reductase subunit B from Roseiflexus sp. (strain RS-1).